The chain runs to 877 residues: MSKFTTEEIRSKFISYFKANNHTHVSSSPLIPHNDPSLMFVNSGMVQFKNVFTGQEKRPYDKAVTSQKSLRAGGKHNDLENVGYTARHHTFFEMLGNFSFGDYFKEQAIYYAWNLLTKEFELPKDKLYATVYHTDDEAASYWKKIAGFSDDRIIRIKTNDNFWSMGDLGPCGPCSEIFYDHGEQIYGGLPGTKDEDGDRFIEIWNMVFMQYEQINKDTRIDLPKKSIDTGMGLERMTAVLQHVNNNYDIDLFQEIISFTENILKVKVEAEAKFSYRVIADHLRACSFLIADGVVPSSEGRGYVLRRIMRRAMRHAHILGSKEPLMYKLLPKLVDLMGNTYPELKRAESFISSILEQEEIRFKTTLERGLKLLSEETENLNAGGRLSGEVAFKLYDTYGFPLDLTEDILKNRNIAVDHQGFEQQMLEQKECARKSWLGSGESKTDQLWFDIKAKYGSTEFLGYNLNEADGKIVALIKDNALVNDISEIDTQFLLIANQTPFYGESGGQMGDIGVIKTQNCEIEVIDTLKYLGFIIVHKCVLKKGKVITDENANFSIDVKYRQNLRIHHSATHLLHAVLHQILGKHVTQKGSLVATSYLRFDISHPKALTPEEIVLIEDKVNEIIRDNHEVDTTLMSTEDAVKQGAMALFGEKYDSEVRVVKMGETSLELCGGTHVRHTGDIGCFKITSESAIAAGIRRIEAVCGEFVIKLIREKEGLLKNIENSLKTNKNELVSKVNNILERNKELEKELEKTYLASLDLSVEQIEKQAEKIKEIKLIYCHVENLDNKILRQAAENLTKKVEDLVVVYVGNNSSKLSITVGISRAITDKFNAGFIAKELSLFLGGSGGGGQPSIAQAGGSDLAKLPKVKDQLQSLLDA.

Zn(2+)-binding residues include histidine 567, histidine 571, cysteine 669, and histidine 673.

This sequence belongs to the class-II aminoacyl-tRNA synthetase family. Requires Zn(2+) as cofactor.

The protein resides in the cytoplasm. The enzyme catalyses tRNA(Ala) + L-alanine + ATP = L-alanyl-tRNA(Ala) + AMP + diphosphate. Catalyzes the attachment of alanine to tRNA(Ala) in a two-step reaction: alanine is first activated by ATP to form Ala-AMP and then transferred to the acceptor end of tRNA(Ala). Also edits incorrectly charged Ser-tRNA(Ala) and Gly-tRNA(Ala) via its editing domain. This chain is Alanine--tRNA ligase, found in Rickettsia bellii (strain RML369-C).